The following is a 372-amino-acid chain: SAM domain-containing protein SAMSN-1 (372 aa).

A disordered region spans residues Met1–Arg71. An Important for interaction with 14-3-3 proteins motif is present at residues Arg20–Gly25. Phosphoserine is present on residues Ser23 and Ser34. Residues Lys37–Leu49 show a composition bias toward basic and acidic residues. The span at Gly52–Gly63 shows a compositional bias: low complexity. Residue Ser74 is modified to Phosphoserine. Phosphothreonine is present on Thr76. 3 positions are modified to phosphoserine: Ser90, Ser97, and Ser119. Positions Ser90–Ile111 are disordered. The segment covering Leu129–Thr146 has biased composition (low complexity). Residues Leu129 to Arg153 are disordered. A Phosphotyrosine modification is found at Tyr160. One can recognise an SH3 domain in the interval Pro163–Glu224. Residues Glu241–Glu305 form the SAM domain. The tract at residues Asp304–Asp372 is disordered. Residues Pro317 to Gln329 show a composition bias toward polar residues.

Interacts with FASLG. Interacts with phosphotyrosine containing proteins. Interacts (via SH3 domain) with CTTN. Interacts (phosphorylated at Ser-23) with YWHAB, YWHAE, YWHAG, YWHAH, YWHAZ and SFN. Interacts directly with SAP30 and HDAC1. Identified in a complex with SAP30 and HDAC1. In terms of tissue distribution, detected in spleen and lymph node (at protein level).

The protein localises to the nucleus. It localises to the cytoplasm. It is found in the cell projection. The protein resides in the ruffle. In terms of biological role, negative regulator of B-cell activation. Down-regulates cell proliferation (in vitro). Promotes RAC1-dependent membrane ruffle formation and reorganization of the actin cytoskeleton. Regulates cell spreading and cell polarization. Stimulates HDAC1 activity. Regulates LYN activity by modulating its tyrosine phosphorylation. This is SAM domain-containing protein SAMSN-1 (Samsn1) from Mus musculus (Mouse).